A 489-amino-acid polypeptide reads, in one-letter code: Pup--protein ligase (489 aa).

Residue glutamate 25 participates in Mg(2+) binding. Residue arginine 69 coordinates ATP. Position 71 (tyrosine 71) interacts with Mg(2+). The active-site Proton acceptor is aspartate 73. Glutamate 79 contacts Mg(2+). Residues threonine 82 and tryptophan 447 each coordinate ATP.

The protein belongs to the Pup ligase/Pup deamidase family. Pup-conjugating enzyme subfamily.

It carries out the reaction ATP + [prokaryotic ubiquitin-like protein]-L-glutamate + [protein]-L-lysine = ADP + phosphate + N(6)-([prokaryotic ubiquitin-like protein]-gamma-L-glutamyl)-[protein]-L-lysine.. It participates in protein degradation; proteasomal Pup-dependent pathway. Its pathway is protein modification; protein pupylation. Catalyzes the covalent attachment of the prokaryotic ubiquitin-like protein modifier Pup to the proteasomal substrate proteins, thereby targeting them for proteasomal degradation. This tagging system is termed pupylation. The ligation reaction involves the side-chain carboxylate of the C-terminal glutamate of Pup and the side-chain amino group of a substrate lysine. This chain is Pup--protein ligase, found in Corynebacterium efficiens (strain DSM 44549 / YS-314 / AJ 12310 / JCM 11189 / NBRC 100395).